Consider the following 397-residue polypeptide: Purine ribonucleoside efflux pump NepI (397 aa).

Over 1–21 the chain is Cytoplasmic; the sequence is MNENIAEKFRADGVARPNWSA. Residues 22–42 traverse the membrane as a helical segment; that stretch reads VFAVAFCVACLITVEFLPVSL. The Periplasmic segment spans residues 43 to 54; it reads LTPMAQDLGISE. The chain crosses the membrane as a helical span at residues 55–75; that stretch reads GVAGQSVTVTAFVAMFSSLFI. Residues 76-85 are Cytoplasmic-facing; sequence TQIIQATDRR. The helical transmembrane segment at 86–106 threads the bilayer; that stretch reads YIVILFAVLLTASCLMVSFAN. Position 107 (Ser-107) is a topological domain, periplasmic. The chain crosses the membrane as a helical span at residues 108 to 128; sequence FTLLLLGRACLGLALGGFWAM. Topologically, residues 129 to 147 are cytoplasmic; it reads SASLTMRLVPARTVPKALS. A helical transmembrane segment spans residues 148 to 168; that stretch reads VIFGAVSIALVIAAPLGSFLG. The Periplasmic segment spans residues 169-175; sequence GIIGWRN. Residues 176 to 196 form a helical membrane-spanning segment; sequence VFNAAAVMGVLCVIWVVKSLP. Residues 197–215 lie on the Cytoplasmic side of the membrane; the sequence is SLPGEPSHQKQNMFSLLQR. Residues 216-236 traverse the membrane as a helical segment; sequence PGVMAGMIAIFMSFAGQFAFF. The Periplasmic portion of the chain corresponds to 237–255; the sequence is TYIRPVYMNLAGFDVDGLT. The helical transmembrane segment at 256-276 threads the bilayer; the sequence is LVLLSFGIASFVGTSFSSYVL. Over 277 to 281 the chain is Cytoplasmic; that stretch reads KRSVK. Residues 282–302 traverse the membrane as a helical segment; that stretch reads LALAGAPLLLALSALTLIVWG. Over 303 to 305 the chain is Periplasmic; it reads SDK. A helical transmembrane segment spans residues 306–326; sequence TVAAVIAIIWGLAFALVPVGW. The Cytoplasmic portion of the chain corresponds to 327–343; it reads STWITRSLADQAEKAGS. A helical membrane pass occupies residues 344-364; sequence IQVAVIQLANTCGAAVGGYAL. Residues 365–366 are Periplasmic-facing; sequence DN. The helical transmembrane segment at 367–387 threads the bilayer; sequence FGLLSPLALSGGLMLLTALVV. Residues 388–397 are Cytoplasmic-facing; the sequence is AAKVRITPMS.

It belongs to the major facilitator superfamily. DHA1 family. NepI (TC 2.A.1.2.26) subfamily.

The protein resides in the cell inner membrane. It catalyses the reaction inosine(in) + H(+)(out) = inosine(out) + H(+)(in). It carries out the reaction guanosine(in) + H(+)(out) = guanosine(out) + H(+)(in). Involved in the efflux of purine ribonucleosides, such as inosine and guanosine. The sequence is that of Purine ribonucleoside efflux pump NepI from Salmonella paratyphi B (strain ATCC BAA-1250 / SPB7).